Here is a 510-residue protein sequence, read N- to C-terminus: NAD(P)H-quinone oxidoreductase subunit 2 B, chloroplastic (510 aa).

Helical transmembrane passes span Leu-24–Leu-44, Ile-57–Phe-77, Ile-99–Ile-119, Met-124–Cys-144, Leu-149–Tyr-169, Tyr-183–Gly-203, Pro-227–Ala-247, Trp-295–Ile-315, Met-323–Asp-343, Gly-347–Ala-367, Ala-395–Phe-415, Leu-418–Leu-438, and Leu-482–Ile-502.

It belongs to the complex I subunit 2 family. NDH is composed of at least 16 different subunits, 5 of which are encoded in the nucleus.

The protein resides in the plastid. Its subcellular location is the chloroplast thylakoid membrane. It carries out the reaction a plastoquinone + NADH + (n+1) H(+)(in) = a plastoquinol + NAD(+) + n H(+)(out). The enzyme catalyses a plastoquinone + NADPH + (n+1) H(+)(in) = a plastoquinol + NADP(+) + n H(+)(out). Its function is as follows. NDH shuttles electrons from NAD(P)H:plastoquinone, via FMN and iron-sulfur (Fe-S) centers, to quinones in the photosynthetic chain and possibly in a chloroplast respiratory chain. The immediate electron acceptor for the enzyme in this species is believed to be plastoquinone. Couples the redox reaction to proton translocation, and thus conserves the redox energy in a proton gradient. In Cucumis sativus (Cucumber), this protein is NAD(P)H-quinone oxidoreductase subunit 2 B, chloroplastic.